Reading from the N-terminus, the 208-residue chain is MPGLRILCLHGQGSNTEIMKAQLGPITKLLKQNGVATFEWLEGTIPTEAGPGVSGVFEDEQSIREACEDLEDYLEENGPYDGILGFSQGSTLLAEFLCDFARRNPGNEPPCRCAIFMNGIPPYRMGDDEKPIIDYGLLEHFPSIPTLHVVGKKDFVYEYSTILQASTASAWATLIAHEKGHEISNDTRIVQKINSAFEQMSIRIALGC.

S87 (charge relay system) is an active-site residue.

This sequence belongs to the LovG family.

It functions in the pathway secondary metabolite biosynthesis. Its function is as follows. Hydrolase; part of the gene cluster that mediates the biosynthesis of the antihypercholesterolemic agents phomoidrides which are dimeric anhydrides. Within the pathway, phiM releases the C12-fatty acyl chain from phiA. The pathway begins with the highly reducing polyketide synthase phiA that catalyzes the formation of a C12-fatty acyl-ACP, starting from one acetate and 5 malonate units. The hydrolase phiM is involved in the release of the C12-fatty acyl chain from phiA. The alkylcitrate synthase (ACS) phiJ and the alkylcitrate dehydratase (ACDH) phiI then give rise to decarboxylated monomeric anhydrides by coupling the C12-fatty acyl chain with oxalacetic acid. The cyclase phiC is responsible for the dimerization of the monomeric anhydrides which leads to the production of prephomoidride that contains the characteristic bicyclo[4.3.1]deca-1,6-diene system of phomoidrides. Iterative oxidation catalyzed by the alpha-ketoglutarate-dependent dioxygenase phiK produced then phomoidride A. Finally, the methyltransferase phiE converts phomoidride A to phomoidride B via an acetalization reaction. The phosphatidylethanolamine-binding protein phiB and phiN are not essential for dimerization and their functions have still to be determined. The polypeptide is Hydrolase phiM (Fungal sp. (strain ATCC 74256)).